A 748-amino-acid polypeptide reads, in one-letter code: Cytosolic phospholipase A2 (748 aa).

The segment at 1-178 is phospholipid binding; the sequence is MSFIDPYQHI…MRKLLGPKKS (178 aa). Phosphoserine is present on serine 2. One can recognise a C2 domain in the interval 6–122; the sequence is PYQHIIVEHQ…KVGEKKEVPF (117 aa). The Ca(2+) site is built by aspartate 40, threonine 41, aspartate 43, asparagine 65, aspartate 93, alanine 94, and asparagine 95. Positions 138-739 constitute a PLA2c domain; that stretch reads VCSSPDLRFS…SNVEARRFFN (602 aa). The active-site Nucleophile is the serine 228. Threonine 268 is subject to Phosphothreonine. Positions 428–458 are disordered; it reads HIVSNDSSDSDDESQEPKGTEGEDAEREYQN. A phosphoserine mark is found at serine 434, serine 435, and serine 437. The segment covering 442–458 has biased composition (basic and acidic residues); the sequence is QEPKGTEGEDAEREYQN. At serine 505 the chain carries Phosphoserine; by MAPK. Serine 514 carries the phosphoserine modification. Lysine 540 is covalently cross-linked (Glycyl lysine isopeptide (Lys-Gly) (interchain with G-Cter in SUMO2)). Residue aspartate 548 is the Proton acceptor of the active site. A Glycyl lysine isopeptide (Lys-Gly) (interchain with G-Cter in SUMO2) cross-link involves residue lysine 605. Phosphoserine is present on residues serine 726 and serine 728.

As to quaternary structure, interacts with KAT5. Phosphorylated at both Ser-505 and Ser-726 in response to mitogenic stimuli.

Its subcellular location is the cytoplasm. The protein localises to the golgi apparatus membrane. The protein resides in the nucleus envelope. The enzyme catalyses a 1,2-diacyl-sn-glycero-3-phosphocholine + H2O = a 1-acyl-sn-glycero-3-phosphocholine + a fatty acid + H(+). The catalysed reaction is a 1-O-alkyl-2-acyl-sn-glycero-3-phosphocholine + H2O = a 1-O-alkyl-sn-glycero-3-phosphocholine + a fatty acid + H(+). It catalyses the reaction a 1-acyl-sn-glycero-3-phosphocholine + H2O = sn-glycerol 3-phosphocholine + a fatty acid + H(+). It carries out the reaction 1-hexadecanoyl-2-(5Z,8Z,11Z,14Z-eicosatetraenoyl)-sn-glycero-3-phosphocholine + H2O = 1-hexadecanoyl-sn-glycero-3-phosphocholine + (5Z,8Z,11Z,14Z)-eicosatetraenoate + H(+). The enzyme catalyses 1,2-di-(5Z,8Z,11Z,14Z-eicosatetraenoyl)-sn-glycero-3-phosphocholine + H2O = 1-(5Z,8Z,11Z,14Z-eicosatetraenoyl)-sn-glycero-3-phosphocholine + (5Z,8Z,11Z,14Z)-eicosatetraenoate + H(+). The catalysed reaction is 1-octadecanoyl-2-(5Z,8Z,11Z,14Z-eicosatetraenoyl)-sn-glycero-3-phosphocholine + H2O = 1-octadecanoyl-sn-glycero-3-phosphocholine + (5Z,8Z,11Z,14Z)-eicosatetraenoate + H(+). It catalyses the reaction 1-hexadecanoyl-2-(9Z,12Z-octadecadienoyl)-sn-glycero-3-phosphocholine + H2O = (9Z,12Z)-octadecadienoate + 1-hexadecanoyl-sn-glycero-3-phosphocholine + H(+). It carries out the reaction 1-octadecanoyl-2-(9Z,12Z,15Z-octadecatrienoyl)-sn-glycero-3-phosphocholine + H2O = (9Z,12Z,15Z)-octadecatrienoate + 1-octadecanoyl-sn-glycero-3-phosphocholine + H(+). The enzyme catalyses 1-(5Z,8Z,11Z,14Z-eicosatetraenoyl)-2-hexadecanoyl-sn-glycero-3-phosphocholine + H2O = 1-(5Z,8Z,11Z,14Z-eicosatetraenoyl)-sn-glycero-3-phosphocholine + hexadecanoate + H(+). The catalysed reaction is 1-O-hexadecyl-2-(5Z,8Z,11Z,14Z)-eicosatetraenoyl-sn-glycero-3-phosphocholine + H2O = 1-O-hexadecyl-sn-glycero-3-phosphocholine + (5Z,8Z,11Z,14Z)-eicosatetraenoate + H(+). It catalyses the reaction 1,2-di-(9Z-octadecenoyl)-sn-glycero-3-phospho-(1'-sn-glycerol) + H2O = 1-(9Z-octadecenoyl)-sn-glycero-3-phospho-(1'-sn-glycerol) + (9Z)-octadecenoate + H(+). It carries out the reaction 1-octadecanoyl-2-(5Z,8Z,11Z,14Z-eicosatetraenoyl)-sn-glycero-3-phosphate + H2O = 1-octadecanoyl-sn-glycero-3-phosphate + (5Z,8Z,11Z,14Z)-eicosatetraenoate + H(+). The enzyme catalyses 1-hexadecanoyl-sn-glycero-3-phosphocholine + H2O = sn-glycerol 3-phosphocholine + hexadecanoate + H(+). The catalysed reaction is 2-(prostaglandin E2)-sn-glycero-3-phosphoethanolamine + H2O = sn-glycero-3-phosphoethanolamine + prostaglandin E2 + H(+). It catalyses the reaction 2-[(15S)-hydroxy-(5Z,8Z,11Z,13E)-eicosatetraenoyl]-sn-glycero-3-phosphocholine + H2O = (15S)-hydroxy-(5Z,8Z,11Z,13E)-eicosatetraenoate + sn-glycerol 3-phosphocholine + H(+). It carries out the reaction 2-[(15R)-hydroxy-(5Z,8Z,11Z,13E)-eicosatetraenoyl]-sn-glycero-3-phosphocholine + H2O = (15R)-hydroxy-(5Z,8Z,11Z,13E)-eicosatetraenoate + sn-glycerol 3-phosphocholine + H(+). The enzyme catalyses 2-(prostaglandin E2)-sn-glycero-3-phosphocholine + H2O = prostaglandin E2 + sn-glycerol 3-phosphocholine + H(+). The catalysed reaction is 2-[(11R)-hydroxy-(5Z,8Z,12E,14Z)-eicosatetraenoyl]-sn-glycero-3-phosphocholine + H2O = (11R)-hydroxy-(5Z,8Z,12E,14Z)-eicosatetraenoate + sn-glycerol 3-phosphocholine + H(+). It catalyses the reaction 1-(5Z,8Z,11Z,14Z-eicosatetraenoyl)-2-O-hexadecyl-sn-glycero-3-phosphocholine + H2O = 2-O-hexadecyl-sn-glycero-3-phosphocholine + (5Z,8Z,11Z,14Z)-eicosatetraenoate + H(+). It carries out the reaction 1-octadecanoyl-2-(5Z,8Z,11Z,14Z-eicosatetraenoyl)-sn-glycero-3-phosphocholine + glycerol = 1-(5Z,8Z,11Z,14Z-eicosatetraenoyl)-glycerol + 1-octadecanoyl-sn-glycero-3-phosphocholine. The enzyme catalyses 1-octadecanoyl-2-(9Z,12Z,15Z-octadecatrienoyl)-sn-glycero-3-phosphocholine + glycerol = 1-(9Z,12Z,15Z-octadecatrienoyl)-glycerol + 1-octadecanoyl-sn-glycero-3-phosphocholine. It functions in the pathway membrane lipid metabolism; glycerophospholipid metabolism. The protein operates within lipid metabolism; arachidonate metabolism. Its pathway is lipid metabolism; prostaglandin biosynthesis. It participates in lipid metabolism; leukotriene B4 biosynthesis. Activated by cytosolic calcium, which is necessary for binding to membrane lipids. Activated by phosphorylation in response to mitogenic stimuli. Has primarily calcium-dependent phospholipase and lysophospholipase activities, with a major role in membrane lipid remodeling and biosynthesis of lipid mediators of the inflammatory response. Plays an important role in embryo implantation and parturition through its ability to trigger prostanoid production. Preferentially hydrolyzes the ester bond of the fatty acyl group attached at sn-2 position of phospholipids (phospholipase A2 activity). Selectively hydrolyzes sn-2 arachidonoyl group from membrane phospholipids, providing the precursor for eicosanoid biosynthesis via the cyclooxygenase pathway. In an alternative pathway of eicosanoid biosynthesis, hydrolyzes sn-2 fatty acyl chain of eicosanoid lysophopholipids to release free bioactive eicosanoids. Hydrolyzes the ester bond of the fatty acyl group attached at sn-1 position of phospholipids (phospholipase A1 activity) only if an ether linkage rather than an ester linkage is present at the sn-2 position. This hydrolysis is not stereospecific. Has calcium-independent phospholipase A2 and lysophospholipase activities in the presence of phosphoinositides. Has O-acyltransferase activity. Catalyzes the transfer of fatty acyl chains from phospholipids to a primary hydroxyl group of glycerol (sn-1 or sn-3), potentially contributing to monoacylglycerol synthesis. The protein is Cytosolic phospholipase A2 (PLA2G4A) of Oryctolagus cuniculus (Rabbit).